The primary structure comprises 420 residues: UDP-N-acetylglucosamine 1-carboxyvinyltransferase (420 aa).

Residue 22 to 23 (KN) participates in phosphoenolpyruvate binding. Position 92 (R92) interacts with UDP-N-acetyl-alpha-D-glucosamine. The Proton donor role is filled by C116. C116 is subject to 2-(S-cysteinyl)pyruvic acid O-phosphothioketal. UDP-N-acetyl-alpha-D-glucosamine contacts are provided by D306 and I328.

It belongs to the EPSP synthase family. MurA subfamily.

It localises to the cytoplasm. It catalyses the reaction phosphoenolpyruvate + UDP-N-acetyl-alpha-D-glucosamine = UDP-N-acetyl-3-O-(1-carboxyvinyl)-alpha-D-glucosamine + phosphate. Its pathway is cell wall biogenesis; peptidoglycan biosynthesis. In terms of biological role, cell wall formation. Adds enolpyruvyl to UDP-N-acetylglucosamine. The chain is UDP-N-acetylglucosamine 1-carboxyvinyltransferase from Blochmanniella floridana.